The primary structure comprises 416 residues: Gamma-glutamyl phosphate reductase (416 aa).

It belongs to the gamma-glutamyl phosphate reductase family.

It localises to the cytoplasm. The catalysed reaction is L-glutamate 5-semialdehyde + phosphate + NADP(+) = L-glutamyl 5-phosphate + NADPH + H(+). Its pathway is amino-acid biosynthesis; L-proline biosynthesis; L-glutamate 5-semialdehyde from L-glutamate: step 2/2. Functionally, catalyzes the NADPH-dependent reduction of L-glutamate 5-phosphate into L-glutamate 5-semialdehyde and phosphate. The product spontaneously undergoes cyclization to form 1-pyrroline-5-carboxylate. The protein is Gamma-glutamyl phosphate reductase of Streptococcus pyogenes serotype M4 (strain MGAS10750).